The following is a 190-amino-acid chain: dCTP deaminase (190 aa).

113 to 118 (KSTYAR) serves as a coordination point for dCTP. Catalysis depends on Glu139, which acts as the Proton donor/acceptor. DCTP contacts are provided by Gln158, Tyr172, Lys181, and Gln182.

This sequence belongs to the dCTP deaminase family. Homotrimer.

It catalyses the reaction dCTP + H2O + H(+) = dUTP + NH4(+). The protein operates within pyrimidine metabolism; dUMP biosynthesis; dUMP from dCTP (dUTP route): step 1/2. Functionally, catalyzes the deamination of dCTP to dUTP. In Chlamydia muridarum (strain MoPn / Nigg), this protein is dCTP deaminase.